The primary structure comprises 91 residues: Sec-independent protein translocase protein TatAt (91 aa).

A helical membrane pass occupies residues Phe-9–Phe-29. Residues Phe-48–Asn-91 form a disordered region. Over residues Glu-54 to Thr-72 the composition is skewed to acidic residues. Positions Ser-73–Asn-91 are enriched in low complexity.

The protein belongs to the TatA/E family. In terms of assembly, forms a complex with TatC. Cytoplasmic and membrane-bound TatA form high-molecular-weight complexes.

The protein resides in the cell membrane. It localises to the cytoplasm. Part of the twin-arginine translocation (Tat) system that transports large folded proteins containing a characteristic twin-arginine motif in their signal peptide across membranes. TatA could form the protein-conducting channel of the Tat system. The sequence is that of Sec-independent protein translocase protein TatAt from Haloferax volcanii (strain ATCC 29605 / DSM 3757 / JCM 8879 / NBRC 14742 / NCIMB 2012 / VKM B-1768 / DS2) (Halobacterium volcanii).